The following is a 529-amino-acid chain: Corneodesmosin (529 aa).

The signal sequence occupies residues 1-32; the sequence is MGSSRAPWMGRVGGHGMMALLLAGLLLPGTLA. Disordered stretches follow at residues 38 to 248 and 383 to 492; these read FSDP…SVSG and GSTG…SSAG. 6 stretches are compositionally biased toward low complexity: residues 58 to 83, 90 to 100, 111 to 175, 189 to 231, 392 to 408, and 426 to 441; these read GKGDSSGFSSYSGSSSSGSSISSARS, GSSSGSSIAQG, GYSQ…NGSA, PSQP…SGGP, SPSSSRVPSSSSISSSS, and PGTGSFSSSSSSQSSG. An N-linked (GlcNAc...) asparagine glycan is attached at N172. Residues 449-467 show a composition bias toward polar residues; the sequence is GSKSSSSGHPCMSVSSLTL.

The protein localises to the secreted. Its function is as follows. Important for the epidermal barrier integrity. This chain is Corneodesmosin (CDSN), found in Pan troglodytes (Chimpanzee).